Consider the following 655-residue polypeptide: Probable glucan endo-1,3-beta-glucosidase btgC (655 aa).

Disordered stretches follow at residues 1–61 (MSGD…ATPG) and 89–114 (SGVD…PGSD). Residues 1-282 (MSGDPRSFSF…PKPGTGSRKR (282 aa)) are Cytoplasmic-facing. Polar residues predominate over residues 19-33 (DSSQQPLHPTNTMAD). The segment covering 89–98 (SGVDAFRDTD) has biased composition (basic and acidic residues). Residues 283–303 (GWIVGIILAVVIVGAIVGGAV) traverse the membrane as a helical; Signal-anchor for type II membrane protein segment. Topologically, residues 304–655 (GGTLGNREKE…IPDCGGKTAT (352 aa)) are extracellular. A disordered region spans residues 305 to 338 (GTLGNREKESPSSSETASGDEKVNGDLGKDSDEI). Positions 323 to 338 (GDEKVNGDLGKDSDEI) are enriched in basic and acidic residues. A glycan (N-linked (GlcNAc...) asparagine) is linked at asparagine 426. Glutamate 458 acts as the Proton donor in catalysis. The Nucleophile role is filled by glutamate 557. N-linked (GlcNAc...) asparagine glycans are attached at residues asparagine 576 and asparagine 602.

Belongs to the glycosyl hydrolase 17 family.

The protein localises to the cell membrane. The catalysed reaction is Hydrolysis of (1-&gt;3)-beta-D-glucosidic linkages in (1-&gt;3)-beta-D-glucans.. Functionally, glucanases play a role in cell expansion during growth, in cell-cell fusion during mating, and in spore release during sporulation. This enzyme may be involved in beta-glucan degradation. Active on laminarin and lichenan. The chain is Probable glucan endo-1,3-beta-glucosidase btgC (btgC) from Aspergillus terreus (strain NIH 2624 / FGSC A1156).